Consider the following 98-residue polypeptide: Putative protein adenylyltransferase MJ0128 (98 aa).

Residues 31 to 45 (GSYARNEQTEKSDID) carry the GSX(10)DXD motif motif. Mg(2+)-binding residues include D43, D45, and D75.

This sequence belongs to the MntA antitoxin family. As to quaternary structure, probably forms a complex with cognate toxin MJ0127. Mg(2+) serves as cofactor.

It catalyses the reaction L-tyrosyl-[protein] + ATP = O-(5'-adenylyl)-L-tyrosyl-[protein] + diphosphate. The enzyme catalyses O-(5'-adenylyl)-L-tyrosyl-[protein] + ATP = O-[5'-(adenylyl-(5'-&gt;3')-adenylyl)]-L-tyrosyl-[protein] + diphosphate. Probable antitoxin component of a putative type VII toxin-antitoxin (TA) system. Neutralizes cognate toxic MJ0127 by di-AMPylation. In Methanocaldococcus jannaschii (strain ATCC 43067 / DSM 2661 / JAL-1 / JCM 10045 / NBRC 100440) (Methanococcus jannaschii), this protein is Putative protein adenylyltransferase MJ0128.